The primary structure comprises 233 residues: DNA repair protein RecO (233 aa).

This sequence belongs to the RecO family.

Functionally, involved in DNA repair and RecF pathway recombination. This chain is DNA repair protein RecO, found in Psychromonas ingrahamii (strain DSM 17664 / CCUG 51855 / 37).